Consider the following 540-residue polypeptide: Beta-2-syntrophin (540 aa).

The interval 73-114 (LPNGGGAGDSLPGSPSRGLGPPSPPAPPRGPAGEAGASPPVR) is disordered. The span at 81–92 (DSLPGSPSRGLG) shows a compositional bias: low complexity. The span at 93-102 (PPSPPAPPRG) shows a compositional bias: pro residues. Ser-95, Ser-110, Ser-129, Ser-211, Ser-222, Ser-233, Ser-393, and Ser-395 each carry phosphoserine. The segment covering 103–112 (PAGEAGASPP) has biased composition (low complexity). The PDZ domain occupies 115–198 (RVRVVKQEAG…EVLLEVKFIR (84 aa)). PH domains are found at residues 163 to 300 (ILSV…TNIM) and 325 to 437 (EVKH…QGCH). The disordered stretch occupies residues 220–240 (PQSPSFSGSEDSGSPKHQNST). Low complexity predominate over residues 222 to 231 (SPSFSGSEDS). An SU domain is found at 484–540 (PFERLKMSADDGIRNLYLDFGGPEGELTMDLHSCPKPIVFVLHTFLSAKVTRMGLLV). Positions 518–540 (PKPIVFVLHTFLSAKVTRMGLLV) are calmodulin-binding.

The protein belongs to the syntrophin family. As to quaternary structure, monomer and homodimer. Interacts with the other members of the syntrophin family: SNTA1 and SNTB1; and with the sodium channel proteins SCN4A and SCN5A. Interacts with SAST, MAST205, microtubules and microtubule-associated proteins. Interacts with the dystrophin protein DMD and related proteins DTNA and UTRN, and with the neuroregulin receptor ERBB4. Interacts with PTPRN when phosphorylated, protecting PTPRN from protein cleavage by CAPN1. Dephosphorylation upon insulin stimulation disrupts the interaction with PTPRN and results in the cleavage of PTPRN. Interacts with DTNB. Phosphorylated. Partially dephosphorylated upon insulin stimulation. In terms of tissue distribution, ubiquitous. Isoform 1 is the predominant isoform. Weak level of isoform 2 is present in all tested tissues, except in liver and heart where it is highly expressed.

It localises to the membrane. Its subcellular location is the cytoplasmic vesicle. It is found in the secretory vesicle membrane. The protein localises to the cell junction. The protein resides in the cytoplasm. It localises to the cytoskeleton. In terms of biological role, adapter protein that binds to and probably organizes the subcellular localization of a variety of membrane proteins. May link various receptors to the actin cytoskeleton and the dystrophin glycoprotein complex. May play a role in the regulation of secretory granules via its interaction with PTPRN. The protein is Beta-2-syntrophin (SNTB2) of Homo sapiens (Human).